We begin with the raw amino-acid sequence, 790 residues long: Lon protease 2 (790 aa).

Positions 18–210 (LRILPLRNMV…HVTFYMTRQL (193 aa)) constitute a Lon N-terminal domain. 362-369 (GPPGVGKT) serves as a coordination point for ATP. In terms of domain architecture, Lon proteolytic spans 598–779 (SWGCGIATGL…SDVLQLALLP (182 aa)). Residues Ser685 and Lys728 contribute to the active site.

The protein belongs to the peptidase S16 family. In terms of assembly, homohexamer. Organized in a ring with a central cavity.

It is found in the cytoplasm. It carries out the reaction Hydrolysis of proteins in presence of ATP.. Functionally, ATP-dependent serine protease that mediates the selective degradation of mutant and abnormal proteins as well as certain short-lived regulatory proteins. Required for cellular homeostasis and for survival from DNA damage and developmental changes induced by stress. Degrades polypeptides processively to yield small peptide fragments that are 5 to 10 amino acids long. Binds to DNA in a double-stranded, site-specific manner. This Syntrophobacter fumaroxidans (strain DSM 10017 / MPOB) protein is Lon protease 2.